A 317-amino-acid polypeptide reads, in one-letter code: Metaxin-1 (317 aa).

Glycyl lysine isopeptide (Lys-Gly) (interchain with G-Cter in ubiquitin) cross-links involve residues K38, K41, K78, and K168. A helical membrane pass occupies residues 272–292 (ILSVLAGLAAMVGYALLSGIV).

Belongs to the metaxin family. Interacts with MTX2/metaxin-2. Associates with the mitochondrial contact site and cristae organizing system (MICOS) complex, composed of at least MICOS10/MIC10, CHCHD3/MIC19, CHCHD6/MIC25, APOOL/MIC27, IMMT/MIC60, APOO/MIC23/MIC26 and QIL1/MIC13. This complex was also known under the names MINOS or MitOS complex. The MICOS complex associates with mitochondrial outer membrane proteins SAMM50, MTX1 and MTX2 (together described as components of the mitochondrial outer membrane sorting assembly machinery (SAM) complex) and DNAJC11, mitochondrial inner membrane protein TMEM11 and with HSPA9. The MICOS and SAM complexes together with DNAJC11 are part of a large protein complex spanning both membranes termed the mitochondrial intermembrane space bridging (MIB) complex. Interacts with ARMC1. Ubiquitinated by PRKN during mitophagy, leading to its degradation and enhancement of mitophagy. Deubiquitinated by USP30. Ubiquitous. Higher levels are seen in the kidney as compared to other tissues.

It is found in the mitochondrion outer membrane. Its function is as follows. Involved in transport of proteins into the mitochondrion. Essential for embryonic development. The sequence is that of Metaxin-1 (Mtx1) from Mus musculus (Mouse).